We begin with the raw amino-acid sequence, 240 residues long: Orotidine 5'-phosphate decarboxylase (240 aa).

Substrate is bound by residues Asp16, Lys37, 64-73 (DLKFHDIPTT), Thr128, Arg190, Gln199, Gly219, and Arg220. Lys66 serves as the catalytic Proton donor.

It belongs to the OMP decarboxylase family. Type 1 subfamily. As to quaternary structure, homodimer.

It carries out the reaction orotidine 5'-phosphate + H(+) = UMP + CO2. Its pathway is pyrimidine metabolism; UMP biosynthesis via de novo pathway; UMP from orotate: step 2/2. In terms of biological role, catalyzes the decarboxylation of orotidine 5'-monophosphate (OMP) to uridine 5'-monophosphate (UMP). The chain is Orotidine 5'-phosphate decarboxylase from Prochlorococcus marinus (strain SARG / CCMP1375 / SS120).